Consider the following 123-residue polypeptide: Large ribosomal subunit protein bL12 (123 aa).

The protein belongs to the bacterial ribosomal protein bL12 family. As to quaternary structure, homodimer. Part of the ribosomal stalk of the 50S ribosomal subunit. Forms a multimeric L10(L12)X complex, where L10 forms an elongated spine to which 2 to 4 L12 dimers bind in a sequential fashion. Binds GTP-bound translation factors.

In terms of biological role, forms part of the ribosomal stalk which helps the ribosome interact with GTP-bound translation factors. Is thus essential for accurate translation. This is Large ribosomal subunit protein bL12 from Laribacter hongkongensis (strain HLHK9).